A 763-amino-acid chain; its full sequence is Xaa-Pro dipeptidyl-peptidase (763 aa).

Residues S348, D468, and H498 each act as charge relay system in the active site.

It belongs to the peptidase S15 family. In terms of assembly, homodimer.

It localises to the cytoplasm. It catalyses the reaction Hydrolyzes Xaa-Pro-|- bonds to release unblocked, N-terminal dipeptides from substrates including Ala-Pro-|-p-nitroanilide and (sequentially) Tyr-Pro-|-Phe-Pro-|-Gly-Pro-|-Ile.. Functionally, removes N-terminal dipeptides sequentially from polypeptides having unsubstituted N-termini provided that the penultimate residue is proline. The chain is Xaa-Pro dipeptidyl-peptidase (pepX) from Lactococcus lactis subsp. cremoris (Streptococcus cremoris).